The chain runs to 107 residues: Nucleoid-associated protein RP866 (107 aa).

The protein belongs to the YbaB/EbfC family. In terms of assembly, homodimer.

The protein localises to the cytoplasm. It localises to the nucleoid. In terms of biological role, binds to DNA and alters its conformation. May be involved in regulation of gene expression, nucleoid organization and DNA protection. This chain is Nucleoid-associated protein RP866, found in Rickettsia prowazekii (strain Madrid E).